The primary structure comprises 601 residues: Protein CT_858 (601 aa).

It belongs to the chlamydial CPn_1016/CT_858/TC_0248 family.

In Chlamydia trachomatis serovar D (strain ATCC VR-885 / DSM 19411 / UW-3/Cx), this protein is Protein CT_858.